The primary structure comprises 868 residues: Protein NIP100 (868 aa).

The 51-residue stretch at 34–84 folds into the CAP-Gly domain; the sequence is GETQFAKGIWYGIELDKPLGKNDGSANGIRYFDIDLKKANSNGGYYGLFCK. Coiled-coil stretches lie at residues 101 to 175, 207 to 375, and 645 to 776; these read LNGN…HLDN, LDQT…QEEL, and SLLS…QIKE.

In terms of assembly, component of the dynactin complex composed of at least ARP1, JNM1, NIP100 and ARP10. Dynactin comprises a short rod of the ARP1 filament attached to ARP10 at its pointed-end and probably associated with the capping protein at its barbed-end. The rod is implicated in dynein cargo binding. A sidearm formed by NIP100 projects from the ARP1 filament and is implicated in motor binding.

The protein localises to the cytoplasm. The protein resides in the cytoskeleton. It is found in the spindle pole. In terms of biological role, motor-binding component of the dynactin complex which assists cytoplasmic dynein by increasing its processivity and by regulation of its cargo binding. The dynactin complex is required for the spindle translocation late in anaphase and is involved in a cell wall synthesis checkpoint. The chain is Protein NIP100 (NIP100) from Saccharomyces cerevisiae (strain ATCC 204508 / S288c) (Baker's yeast).